The following is a 102-amino-acid chain: PqqA binding protein (102 aa).

The protein belongs to the PqqD family. In terms of assembly, monomer. Interacts with PqqE.

It functions in the pathway cofactor biosynthesis; pyrroloquinoline quinone biosynthesis. Its function is as follows. Functions as a PqqA binding protein and presents PqqA to PqqE, in the pyrroloquinoline quinone (PQQ) biosynthetic pathway. This chain is PqqA binding protein, found in Rhodopseudomonas palustris (strain TIE-1).